A 548-amino-acid chain; its full sequence is Membrane protein insertase YidC (548 aa).

A helical membrane pass occupies residues 6–26 (NLLVIALLFVSFMIWQAWEQD). Residues 28-56 (NPQPQTQQTTQTTTTAAGSAADQGVPASG) form a disordered region. The span at 29–42 (PQPQTQQTTQTTTT) shows a compositional bias: low complexity. A run of 4 helical transmembrane segments spans residues 350-370 (FVGN…GIMY), 424-444 (FPLI…MGSI), 458-478 (LSAQ…MFFI), and 499-519 (PVIF…YYIV).

Belongs to the OXA1/ALB3/YidC family. Type 1 subfamily. In terms of assembly, interacts with the Sec translocase complex via SecD. Specifically interacts with transmembrane segments of nascent integral membrane proteins during membrane integration.

Its subcellular location is the cell inner membrane. Its function is as follows. Required for the insertion and/or proper folding and/or complex formation of integral membrane proteins into the membrane. Involved in integration of membrane proteins that insert both dependently and independently of the Sec translocase complex, as well as at least some lipoproteins. Aids folding of multispanning membrane proteins. The chain is Membrane protein insertase YidC from Salmonella typhimurium (strain LT2 / SGSC1412 / ATCC 700720).